The following is a 241-amino-acid chain: Geranylgeranylglyceryl phosphate synthase (241 aa).

The Mg(2+) site is built by Asp19 and Ser46. Sn-glycerol 1-phosphate contacts are provided by residues 167-173, 198-199, and 220-221; these read YLEAGSG, GG, and GT.

It belongs to the GGGP/HepGP synthase family. Group II subfamily. It depends on Mg(2+) as a cofactor.

The protein resides in the cytoplasm. The enzyme catalyses sn-glycerol 1-phosphate + (2E,6E,10E)-geranylgeranyl diphosphate = sn-3-O-(geranylgeranyl)glycerol 1-phosphate + diphosphate. It functions in the pathway membrane lipid metabolism; glycerophospholipid metabolism. Prenyltransferase that catalyzes the transfer of the geranylgeranyl moiety of geranylgeranyl diphosphate (GGPP) to the C3 hydroxyl of sn-glycerol-1-phosphate (G1P). This reaction is the first ether-bond-formation step in the biosynthesis of archaeal membrane lipids. The polypeptide is Geranylgeranylglyceryl phosphate synthase (Pyrobaculum calidifontis (strain DSM 21063 / JCM 11548 / VA1)).